The primary structure comprises 151 residues: Ribonuclease H (151 aa).

The RNase H type-1 domain occupies 1 to 146 (MSDLFAYTDG…ADELARAGMA (146 aa)). Residues Asp-9, Glu-52, Asp-74, and Asp-138 each coordinate Mg(2+).

This sequence belongs to the RNase H family. As to quaternary structure, monomer. Mg(2+) is required as a cofactor.

The protein resides in the cytoplasm. It catalyses the reaction Endonucleolytic cleavage to 5'-phosphomonoester.. Endonuclease that specifically degrades the RNA of RNA-DNA hybrids. This is Ribonuclease H from Cereibacter sphaeroides (strain ATCC 17025 / ATH 2.4.3) (Rhodobacter sphaeroides).